The chain runs to 90 residues: Small ribosomal subunit protein bS20 (90 aa).

This sequence belongs to the bacterial ribosomal protein bS20 family.

Its function is as follows. Binds directly to 16S ribosomal RNA. This is Small ribosomal subunit protein bS20 from Francisella tularensis subsp. holarctica (strain FTNF002-00 / FTA).